A 96-amino-acid chain; its full sequence is MAQISVTPEELKSQAQVYIQSKEEIDQAIQKVNSMNSTIAEEWKGQAFQAYLEQYNQLHQTVVQFENLLESVNQQLNKYADTVAERDAQDAQSFGF.

Residues 9 to 86 (EELKSQAQVY…NKYADTVAER (78 aa)) are a coiled coil.

This sequence belongs to the WXG100 family. sagEsxA-like subfamily.

This is an uncharacterized protein from Clostridium acetobutylicum (strain ATCC 824 / DSM 792 / JCM 1419 / IAM 19013 / LMG 5710 / NBRC 13948 / NRRL B-527 / VKM B-1787 / 2291 / W).